The following is a 274-amino-acid chain: Dermonecrotic toxin LspiSicTox-betaIII1 G (274 aa).

His-5 is an active-site residue. Residues Glu-25 and Asp-27 each coordinate Mg(2+). His-41 serves as the catalytic Nucleophile. Intrachain disulfides connect Cys-45–Cys-51 and Cys-47–Cys-189. Residue Asn-66 is glycosylated (N-linked (GlcNAc...) asparagine). Asp-85 is a binding site for Mg(2+).

It belongs to the arthropod phospholipase D family. Class II subfamily. Mg(2+) serves as cofactor. In terms of tissue distribution, expressed by the venom gland.

Its subcellular location is the secreted. It carries out the reaction an N-(acyl)-sphingosylphosphocholine = an N-(acyl)-sphingosyl-1,3-cyclic phosphate + choline. The enzyme catalyses an N-(acyl)-sphingosylphosphoethanolamine = an N-(acyl)-sphingosyl-1,3-cyclic phosphate + ethanolamine. It catalyses the reaction a 1-acyl-sn-glycero-3-phosphocholine = a 1-acyl-sn-glycero-2,3-cyclic phosphate + choline. The catalysed reaction is a 1-acyl-sn-glycero-3-phosphoethanolamine = a 1-acyl-sn-glycero-2,3-cyclic phosphate + ethanolamine. Functionally, dermonecrotic toxins cleave the phosphodiester linkage between the phosphate and headgroup of certain phospholipids (sphingolipid and lysolipid substrates), forming an alcohol (often choline) and a cyclic phosphate. This toxin acts on sphingomyelin (SM). It may also act on ceramide phosphoethanolamine (CPE), lysophosphatidylcholine (LPC) and lysophosphatidylethanolamine (LPE), but not on lysophosphatidylserine (LPS), and lysophosphatidylglycerol (LPG). It acts by transphosphatidylation, releasing exclusively cyclic phosphate products as second products. Induces dermonecrosis, hemolysis, increased vascular permeability, edema, inflammatory response, and platelet aggregation. This chain is Dermonecrotic toxin LspiSicTox-betaIII1 G, found in Loxosceles spinulosa (Recluse spider).